The sequence spans 360 residues: Peptide chain release factor 1 (360 aa).

Gln235 carries the N5-methylglutamine modification.

This sequence belongs to the prokaryotic/mitochondrial release factor family. Methylated by PrmC. Methylation increases the termination efficiency of RF1.

Its subcellular location is the cytoplasm. Peptide chain release factor 1 directs the termination of translation in response to the peptide chain termination codons UAG and UAA. This chain is Peptide chain release factor 1, found in Paracidovorax citrulli (strain AAC00-1) (Acidovorax citrulli).